The following is a 446-amino-acid chain: Replication-associated recombination protein A (446 aa).

57–64 (GPPGTGKT) contacts ATP.

This sequence belongs to the AAA ATPase family. RarA/MGS1/WRNIP1 subfamily.

DNA-dependent ATPase that plays important roles in cellular responses to stalled DNA replication processes. This Haemophilus influenzae (strain ATCC 51907 / DSM 11121 / KW20 / Rd) protein is Replication-associated recombination protein A (rarA).